Here is a 67-residue protein sequence, read N- to C-terminus: uncharacterized protein (67 aa).

The next 2 helical transmembrane spans lie at 10-30 and 40-60; these read EFFI…IIMW and LMVG…WMVF.

Belongs to the plectrovirus ORF10 family.

It is found in the host membrane. This is an uncharacterized protein from Spiroplasma melliferum (SpV1).